Here is a 620-residue protein sequence, read N- to C-terminus: Chaperone protein DnaK (620 aa).

Thr-197 carries the phosphothreonine; by autocatalysis modification. The disordered stretch occupies residues 591-620; it reads AQKLGEAMANKNNAEQPKKKDDDVIDAEVE.

Belongs to the heat shock protein 70 family.

Its function is as follows. Acts as a chaperone. The protein is Chaperone protein DnaK of Helicobacter pylori (strain HPAG1).